A 525-amino-acid chain; its full sequence is Beta-galactoside alpha-2,6-sialyltransferase 2 (525 aa).

The Cytoplasmic segment spans residues 1–11 (MKPHLKQWRQR). The helical; Signal-anchor for type II membrane protein transmembrane segment at 12 to 32 (MLFAIFVWGLLFLAIFIYFTN) threads the bilayer. The Lumenal portion of the chain corresponds to 33–525 (SNPAAPMPSS…PVTRPNNTNT (493 aa)). 2 disordered regions span residues 85–107 (SASP…DGFD) and 145–183 (RQGA…PEEA). Cystine bridges form between Cys-249–Cys-515, Cys-292–Cys-444, and Cys-462–Cys-473. Residues Asn-303 and Asn-333 are each glycosylated (N-linked (GlcNAc...) asparagine). A glycan (N-linked (GlcNAc...) asparagine) is linked at Asn-521.

Belongs to the glycosyltransferase 29 family.

It is found in the golgi apparatus. It localises to the golgi stack membrane. It carries out the reaction a beta-D-galactoside + CMP-N-acetyl-beta-neuraminate = an N-acetyl-alpha-neuraminyl-(2-&gt;6)-beta-D-galactosyl derivative + CMP + H(+). In terms of biological role, transfers sialic acid from the donor of substrate CMP-sialic acid to galactose containing acceptor substrates. Has alpha-2,6-sialyltransferase activity toward oligosaccharides that have the Gal-beta-1,4-GlcNAc sequence at the non-reducing end of their carbohydrate groups, but it has weak or no activities toward glycoproteins and glycolipids. This is Beta-galactoside alpha-2,6-sialyltransferase 2 (St6gal2) from Rattus norvegicus (Rat).